The sequence spans 355 residues: Phosphoribosylformylglycinamidine cyclo-ligase (355 aa).

Belongs to the AIR synthase family.

Its subcellular location is the cytoplasm. The enzyme catalyses 2-formamido-N(1)-(5-O-phospho-beta-D-ribosyl)acetamidine + ATP = 5-amino-1-(5-phospho-beta-D-ribosyl)imidazole + ADP + phosphate + H(+). It functions in the pathway purine metabolism; IMP biosynthesis via de novo pathway; 5-amino-1-(5-phospho-D-ribosyl)imidazole from N(2)-formyl-N(1)-(5-phospho-D-ribosyl)glycinamide: step 2/2. The sequence is that of Phosphoribosylformylglycinamidine cyclo-ligase from Paraburkholderia phymatum (strain DSM 17167 / CIP 108236 / LMG 21445 / STM815) (Burkholderia phymatum).